Consider the following 785-residue polypeptide: Endonuclease MutS2 (785 aa).

331–338 is an ATP binding site; sequence GPNTGGKT. In terms of domain architecture, Smr spans 710-785; it reads LDLRGLYADE…GLGVTVVELA (76 aa).

The protein belongs to the DNA mismatch repair MutS family. MutS2 subfamily. Homodimer. Binds to stalled ribosomes, contacting rRNA.

Endonuclease that is involved in the suppression of homologous recombination and thus may have a key role in the control of bacterial genetic diversity. Its function is as follows. Acts as a ribosome collision sensor, splitting the ribosome into its 2 subunits. Detects stalled/collided 70S ribosomes which it binds and splits by an ATP-hydrolysis driven conformational change. Acts upstream of the ribosome quality control system (RQC), a ribosome-associated complex that mediates the extraction of incompletely synthesized nascent chains from stalled ribosomes and their subsequent degradation. Probably generates substrates for RQC. The protein is Endonuclease MutS2 of Pelotomaculum thermopropionicum (strain DSM 13744 / JCM 10971 / SI).